A 306-amino-acid polypeptide reads, in one-letter code: UDP-N-acetylenolpyruvoylglucosamine reductase (306 aa).

Positions 29–193 (RVGGPADWLF…IRASLRGTPD (165 aa)) constitute an FAD-binding PCMH-type domain. Residue Arg-173 is part of the active site. Ser-222 acts as the Proton donor in catalysis. Residue Glu-292 is part of the active site.

It belongs to the MurB family. FAD serves as cofactor.

It is found in the cytoplasm. The catalysed reaction is UDP-N-acetyl-alpha-D-muramate + NADP(+) = UDP-N-acetyl-3-O-(1-carboxyvinyl)-alpha-D-glucosamine + NADPH + H(+). It participates in cell wall biogenesis; peptidoglycan biosynthesis. Functionally, cell wall formation. The polypeptide is UDP-N-acetylenolpyruvoylglucosamine reductase (Gluconobacter oxydans (strain 621H) (Gluconobacter suboxydans)).